The sequence spans 172 residues: MKLTKLWLLFVCLGLFVTLVVSADTDSDADSDSSADSDSSADSDENTTASGSIVTSTTESSATNSSGSSDDASGSSSDVDDGSDDDTDSGSDTDYDTPTTAPVVKKRANRKKANNNKKRASNNRKKANNNNNNKKRANSNNNRKRRASNNNNKKKASNNNNRRRNNNSRRRG.

Positions 1 to 22 (MKLTKLWLLFVCLGLFVTLVVS) are cleaved as a signal peptide. Acidic residues predominate over residues 25–45 (TDSDADSDSSADSDSSADSDE). The disordered stretch occupies residues 25-172 (TDSDADSDSS…RRNNNSRRRG (148 aa)). 3 tandem repeats follow at residues 27-32 (SDADSD), 33-38 (SSADSD), and 39-44 (SSADSD). The segment at 27 to 44 (SDADSDSSADSDSSADSD) is 3 X 6 AA tandem repeats of S-S-A-D-S-D. Over residues 55–77 (TSTTESSATNSSGSSDDASGSSS) the composition is skewed to low complexity. A compositionally biased stretch (acidic residues) spans 78 to 95 (DVDDGSDDDTDSGSDTDY). Residues 104-172 (VKKRANRKKA…RRNNNSRRRG (69 aa)) are compositionally biased toward basic residues.

As to expression, low expression in first to third instar larvae salivary glands.

The protein is Pre-intermoult gene 1 protein (Pig1) of Drosophila melanogaster (Fruit fly).